The primary structure comprises 473 residues: UDP-N-acetylmuramate--L-alanine ligase (473 aa).

123–129 lines the ATP pocket; the sequence is GSHGKTS.

The protein belongs to the MurCDEF family.

The protein resides in the cytoplasm. It catalyses the reaction UDP-N-acetyl-alpha-D-muramate + L-alanine + ATP = UDP-N-acetyl-alpha-D-muramoyl-L-alanine + ADP + phosphate + H(+). It functions in the pathway cell wall biogenesis; peptidoglycan biosynthesis. In terms of biological role, cell wall formation. The polypeptide is UDP-N-acetylmuramate--L-alanine ligase (Prochlorococcus marinus subsp. pastoris (strain CCMP1986 / NIES-2087 / MED4)).